We begin with the raw amino-acid sequence, 422 residues long: GTPase Obg (422 aa).

The 158-residue stretch at 4 to 161 (LHFVDEAFNE…FKIKTELKVL (158 aa)) folds into the Obg domain. The OBG-type G domain maps to 162–327 (ADIGLLGFPS…LKYEMSSLLQ (166 aa)). Residues 168–175 (GFPSVGKS), 193–197 (FTTIK), 214–217 (DLPG), 281–284 (NKMD), and 308–310 (SLV) each bind GTP. Mg(2+)-binding residues include Ser-175 and Thr-195. The OCT domain occupies 345–422 (TLPDNQNTIS…KICDRLFYFL (78 aa)).

It belongs to the TRAFAC class OBG-HflX-like GTPase superfamily. OBG GTPase family. Monomer. Mg(2+) is required as a cofactor.

The protein localises to the cytoplasm. An essential GTPase which binds GTP, GDP and possibly (p)ppGpp with moderate affinity, with high nucleotide exchange rates and a fairly low GTP hydrolysis rate. Plays a role in control of the cell cycle, stress response, ribosome biogenesis and in those bacteria that undergo differentiation, in morphogenesis control. This is GTPase Obg from Onion yellows phytoplasma (strain OY-M).